Reading from the N-terminus, the 506-residue chain is UDP-N-acetylmuramoyl-L-alanyl-D-glutamate--2,6-diaminopimelate ligase (506 aa).

S38 contacts UDP-N-acetyl-alpha-D-muramoyl-L-alanyl-D-glutamate. 124 to 130 (GTNGKTS) provides a ligand contact to ATP. UDP-N-acetyl-alpha-D-muramoyl-L-alanyl-D-glutamate-binding positions include 166–167 (TT), S193, and R201. At K233 the chain carries N6-carboxylysine. Meso-2,6-diaminopimelate is bound by residues R401, 425 to 428 (DNPR), G477, and E481. Residues 425-428 (DNPR) carry the Meso-diaminopimelate recognition motif motif.

It belongs to the MurCDEF family. MurE subfamily. It depends on Mg(2+) as a cofactor. Post-translationally, carboxylation is probably crucial for Mg(2+) binding and, consequently, for the gamma-phosphate positioning of ATP.

The protein localises to the cytoplasm. The catalysed reaction is UDP-N-acetyl-alpha-D-muramoyl-L-alanyl-D-glutamate + meso-2,6-diaminopimelate + ATP = UDP-N-acetyl-alpha-D-muramoyl-L-alanyl-gamma-D-glutamyl-meso-2,6-diaminopimelate + ADP + phosphate + H(+). Its pathway is cell wall biogenesis; peptidoglycan biosynthesis. Its function is as follows. Catalyzes the addition of meso-diaminopimelic acid to the nucleotide precursor UDP-N-acetylmuramoyl-L-alanyl-D-glutamate (UMAG) in the biosynthesis of bacterial cell-wall peptidoglycan. This is UDP-N-acetylmuramoyl-L-alanyl-D-glutamate--2,6-diaminopimelate ligase from Leptospira interrogans serogroup Icterohaemorrhagiae serovar copenhageni (strain Fiocruz L1-130).